Here is a 120-residue protein sequence, read N- to C-terminus: Immunoglobulin kappa variable 2D-26 (120 aa).

The N-terminal stretch at 1–20 is a signal peptide; that stretch reads MRLPAQLLGLLMLWVPGSSA. Residues 21–43 are framework-1; it reads EIVMTQTPLSLSITPGEQASMSC. The region spanning 21–120 is the Ig-like domain; it reads EIVMTQTPLS…YYCMQDAQDP (100 aa). Cys-43 and Cys-113 are oxidised to a cystine. Positions 44 to 59 are complementarity-determining-1; it reads RSSQSLLHSDGYTYLY. Residues 60-74 are framework-2; the sequence is WFLQKARPVSTLLIY. Residues 75–81 are complementarity-determining-2; the sequence is EVSNRFS. Residues 82–113 form a framework-3 region; that stretch reads GVPDRFSGSGSGTDFTLKISRVEAEDFGVYYC. Positions 114-120 are complementarity-determining-3; sequence MQDAQDP.

Immunoglobulins are composed of two identical heavy chains and two identical light chains; disulfide-linked.

The protein resides in the secreted. Its subcellular location is the cell membrane. V region of the variable domain of immunoglobulin light chains that participates in the antigen recognition. Immunoglobulins, also known as antibodies, are membrane-bound or secreted glycoproteins produced by B lymphocytes. In the recognition phase of humoral immunity, the membrane-bound immunoglobulins serve as receptors which, upon binding of a specific antigen, trigger the clonal expansion and differentiation of B lymphocytes into immunoglobulins-secreting plasma cells. Secreted immunoglobulins mediate the effector phase of humoral immunity, which results in the elimination of bound antigens. The antigen binding site is formed by the variable domain of one heavy chain, together with that of its associated light chain. Thus, each immunoglobulin has two antigen binding sites with remarkable affinity for a particular antigen. The variable domains are assembled by a process called V-(D)-J rearrangement and can then be subjected to somatic hypermutations which, after exposure to antigen and selection, allow affinity maturation for a particular antigen. This is Immunoglobulin kappa variable 2D-26 from Homo sapiens (Human).